A 690-amino-acid polypeptide reads, in one-letter code: Ligand of Numb protein X 2 (690 aa).

The segment at 50–88 (CHICLQPLLQPLDTPCGHTFCYKCLRNFLQEKDFCPLDR) adopts an RING-type zinc-finger fold. The segment at 198 to 224 (STWSEEPGLDNPAFEESAGADTTQQPL) is disordered. The short motif at 208–211 (NPAF) is the NPXY motif element. PDZ domains lie at 233-318 (TIEI…LRER), 339-422 (QVAL…ARPG), 468-554 (HITV…KALE), and 600-688 (DIVL…WPGS). Positions 418–455 (IARPGKPQPGNTIREAGNHSSSSQHHTPPPYYSRPSSH) are disordered.

In terms of assembly, interacts with the phosphotyrosine interaction domain of NUMB.

The chain is Ligand of Numb protein X 2 (LNX2) from Homo sapiens (Human).